Reading from the N-terminus, the 364-residue chain is Coproporphyrin III ferrochelatase (364 aa).

Arg-29 and Tyr-118 together coordinate Fe-coproporphyrin III. 2 residues coordinate Fe(2+): His-169 and Glu-250.

It belongs to the ferrochelatase family.

The protein resides in the cytoplasm. It catalyses the reaction Fe-coproporphyrin III + 2 H(+) = coproporphyrin III + Fe(2+). The protein operates within porphyrin-containing compound metabolism; protoheme biosynthesis. Its function is as follows. Involved in coproporphyrin-dependent heme b biosynthesis. Catalyzes the insertion of ferrous iron into coproporphyrin III to form Fe-coproporphyrin III. The polypeptide is Coproporphyrin III ferrochelatase (Streptococcus pneumoniae (strain Taiwan19F-14)).